Reading from the N-terminus, the 219-residue chain is MTQDELKKAVGWAALQYVQPGTIVGVGTGSTAAHFIDALGTMKDQIEGAVSSSDASTEKLKSLGITVFDLNDVDSLGIYVDGADEINGHMQMIKGGGAALTREKIIASVAKKFICIADASKQVDILGKFPLPVEVIPMARSAVARQLVKLGGRPEYRQGVITDNGNVILDVHGMEILDPVAMENAINAIPGVVTVGLFANRGADVALIGTAEGVKTIVK.

Residues 28–31, 81–84, and 94–97 contribute to the substrate site; these read TGST, DGAD, and KGGG. The active-site Proton acceptor is E103. Substrate is bound at residue K121.

It belongs to the ribose 5-phosphate isomerase family. Homodimer.

It carries out the reaction aldehydo-D-ribose 5-phosphate = D-ribulose 5-phosphate. It participates in carbohydrate degradation; pentose phosphate pathway; D-ribose 5-phosphate from D-ribulose 5-phosphate (non-oxidative stage): step 1/1. Functionally, catalyzes the reversible conversion of ribose-5-phosphate to ribulose 5-phosphate. This Escherichia fergusonii (strain ATCC 35469 / DSM 13698 / CCUG 18766 / IAM 14443 / JCM 21226 / LMG 7866 / NBRC 102419 / NCTC 12128 / CDC 0568-73) protein is Ribose-5-phosphate isomerase A.